The sequence spans 270 residues: 4-hydroxy-tetrahydrodipicolinate reductase (270 aa).

NAD(+)-binding positions include 9–14 (GSGGRM) and glutamate 35. Position 36 (arginine 36) interacts with NADP(+). Residues 99 to 101 (GTT) and 123 to 126 (ASNY) contribute to the NAD(+) site. Histidine 156 functions as the Proton donor/acceptor in the catalytic mechanism. Histidine 157 lines the (S)-2,3,4,5-tetrahydrodipicolinate pocket. The Proton donor role is filled by lysine 160. 166–167 (GT) contributes to the (S)-2,3,4,5-tetrahydrodipicolinate binding site.

The protein belongs to the DapB family.

It is found in the cytoplasm. The catalysed reaction is (S)-2,3,4,5-tetrahydrodipicolinate + NAD(+) + H2O = (2S,4S)-4-hydroxy-2,3,4,5-tetrahydrodipicolinate + NADH + H(+). It catalyses the reaction (S)-2,3,4,5-tetrahydrodipicolinate + NADP(+) + H2O = (2S,4S)-4-hydroxy-2,3,4,5-tetrahydrodipicolinate + NADPH + H(+). The protein operates within amino-acid biosynthesis; L-lysine biosynthesis via DAP pathway; (S)-tetrahydrodipicolinate from L-aspartate: step 4/4. In terms of biological role, catalyzes the conversion of 4-hydroxy-tetrahydrodipicolinate (HTPA) to tetrahydrodipicolinate. In Histophilus somni (strain 2336) (Haemophilus somnus), this protein is 4-hydroxy-tetrahydrodipicolinate reductase.